Consider the following 445-residue polypeptide: 23S rRNA (uracil(1939)-C(5))-methyltransferase RlmD (445 aa).

In terms of domain architecture, TRAM spans Ser-12 to Lys-70. [4Fe-4S] cluster contacts are provided by Cys-83, Cys-89, Cys-92, and Cys-171. Residues Gln-278, Phe-307, Asn-312, Glu-328, Asp-355, and Asp-375 each contribute to the S-adenosyl-L-methionine site. Cys-401 serves as the catalytic Nucleophile.

The protein belongs to the class I-like SAM-binding methyltransferase superfamily. RNA M5U methyltransferase family. RlmD subfamily.

The catalysed reaction is uridine(1939) in 23S rRNA + S-adenosyl-L-methionine = 5-methyluridine(1939) in 23S rRNA + S-adenosyl-L-homocysteine + H(+). Catalyzes the formation of 5-methyl-uridine at position 1939 (m5U1939) in 23S rRNA. The chain is 23S rRNA (uracil(1939)-C(5))-methyltransferase RlmD from Shewanella halifaxensis (strain HAW-EB4).